Reading from the N-terminus, the 358-residue chain is PDZ and LIM domain protein 3 (358 aa).

A PDZ domain is found at 1–84; sequence MPQNVLLPGP…QLCLKIDRAE (84 aa). Disordered regions lie at residues 126–155 and 237–274; these read FILP…SVST and DTEH…RAPV. The span at 129–146 shows a compositional bias: low complexity; that stretch reads PGRSSGSSTPSGFDPGSG. In terms of domain architecture, LIM zinc-binding spans 288–347; it reads PICDRCGNGIVGTVVKAKDKLRHPDCFVCSDCNLNLKQKGYFFVEGQLYCEAHARARMRP.

The protein resides in the cytoplasm. It localises to the myofibril. Its subcellular location is the sarcomere. The protein localises to the z line. May play a role in the organization of actin filament arrays within muscle cells. This Xenopus laevis (African clawed frog) protein is PDZ and LIM domain protein 3 (pdlim3).